The sequence spans 168 residues: HTH-type transcriptional regulator IscR (168 aa).

One can recognise an HTH rrf2-type domain in the interval 2 to 131 (KLTSKGRYAV…NNITLGELMK (130 aa)). Positions 28-51 (LADISERQGISLSYLEQLFSKLRK) form a DNA-binding region, H-T-H motif. 3 residues coordinate [2Fe-2S] cluster: cysteine 92, cysteine 98, and cysteine 104.

[2Fe-2S] cluster serves as cofactor.

Its function is as follows. Regulates the transcription of several operons and genes involved in the biogenesis of Fe-S clusters and Fe-S-containing proteins. The sequence is that of HTH-type transcriptional regulator IscR from Vibrio campbellii (strain ATCC BAA-1116).